A 324-amino-acid polypeptide reads, in one-letter code: UPF0158 protein CPn_0518/CP_0235/CPj0518/CpB0539 (324 aa).

The protein belongs to the UPF0158 family.

The chain is UPF0158 protein CPn_0518/CP_0235/CPj0518/CpB0539 from Chlamydia pneumoniae (Chlamydophila pneumoniae).